The primary structure comprises 335 residues: Phospho-N-acetylmuramoyl-pentapeptide-transferase (335 aa).

10 helical membrane passes run 3–23 (LTIL…PHFI), 53–73 (GGTV…LVYF), 78–98 (SLGL…IGFL), 118–138 (FTFQ…PSGI), 143–163 (VFGY…FWVV), 174–194 (GIDG…GVIA), 200–220 (FDVL…FLFN), 226–246 (IFMG…ISIA), 251–271 (WTLL…MLQV), and 314–334 (VDAF…AILY).

It belongs to the glycosyltransferase 4 family. MraY subfamily. Requires Mg(2+) as cofactor.

It is found in the cell membrane. It carries out the reaction UDP-N-acetyl-alpha-D-muramoyl-L-alanyl-gamma-D-glutamyl-L-lysyl-D-alanyl-D-alanine + di-trans,octa-cis-undecaprenyl phosphate = Mur2Ac(oyl-L-Ala-gamma-D-Glu-L-Lys-D-Ala-D-Ala)-di-trans,octa-cis-undecaprenyl diphosphate + UMP. The protein operates within cell wall biogenesis; peptidoglycan biosynthesis. Functionally, catalyzes the initial step of the lipid cycle reactions in the biosynthesis of the cell wall peptidoglycan: transfers peptidoglycan precursor phospho-MurNAc-pentapeptide from UDP-MurNAc-pentapeptide onto the lipid carrier undecaprenyl phosphate, yielding undecaprenyl-pyrophosphoryl-MurNAc-pentapeptide, known as lipid I. This is Phospho-N-acetylmuramoyl-pentapeptide-transferase from Streptococcus equi subsp. equi (strain 4047).